The following is a 776-amino-acid chain: Endonuclease MutS2 (776 aa).

330-337 is a binding site for ATP; the sequence is GPNTGGKT. The Smr domain maps to 701–776; that stretch reads LDLRGMRYEE…GSGATIAILK (76 aa).

It belongs to the DNA mismatch repair MutS family. MutS2 subfamily. As to quaternary structure, homodimer. Binds to stalled ribosomes, contacting rRNA.

Its function is as follows. Endonuclease that is involved in the suppression of homologous recombination and thus may have a key role in the control of bacterial genetic diversity. Functionally, acts as a ribosome collision sensor, splitting the ribosome into its 2 subunits. Detects stalled/collided 70S ribosomes which it binds and splits by an ATP-hydrolysis driven conformational change. Acts upstream of the ribosome quality control system (RQC), a ribosome-associated complex that mediates the extraction of incompletely synthesized nascent chains from stalled ribosomes and their subsequent degradation. Probably generates substrates for RQC. This is Endonuclease MutS2 from Lactococcus lactis subsp. lactis (strain IL1403) (Streptococcus lactis).